The sequence spans 169 residues: MSDNKHRVTRRQFLNYTLTGVGGFMAAGMLMPMLRFAFDPILRETAGTDMVAVADVKEITTEPKRFDFKVKVKDAWYESEEPRSAWVYKDEKGDIIALSPVCKHLGCTVDWNTDKNNPNHFFCPCHYGLYTKDGTNVPGTPPTAPLDRYEFEVKDGKLYLGKAKPRGEA.

The region spanning 62 to 160 (EPKRFDFKVK…FEVKDGKLYL (99 aa)) is the Rieske domain. Residues C102, H104, C123, and H126 each coordinate [2Fe-2S] cluster. Residues C107 and C125 are joined by a disulfide bond.

The protein belongs to the Rieske iron-sulfur protein family. The main subunits of the menaquinol:cytochrome c complex are a Rieske-type iron-sulfur protein (QcrA), a cytochrome b (QcrB) and a cytochrome c (QcrC). [2Fe-2S] cluster is required as a cofactor.

Component of the menaquinol:cytochrome c reductase complex. The Rieske protein is a high potential 2Fe-2S protein. This chain is Menaquinol:cytochrome c reductase iron-sulfur subunit (qcrA), found in Geobacillus thermodenitrificans.